The following is a 322-amino-acid chain: tRNA dimethylallyltransferase (322 aa).

An ATP-binding site is contributed by 18–25; that stretch reads GPTASGKS. 20 to 25 serves as a coordination point for substrate; sequence TASGKS. Interaction with substrate tRNA stretches follow at residues 43 to 46 and 167 to 171; these read DSRQ and QRLVR.

It belongs to the IPP transferase family. Monomer. Mg(2+) serves as cofactor.

It carries out the reaction adenosine(37) in tRNA + dimethylallyl diphosphate = N(6)-dimethylallyladenosine(37) in tRNA + diphosphate. Its function is as follows. Catalyzes the transfer of a dimethylallyl group onto the adenine at position 37 in tRNAs that read codons beginning with uridine, leading to the formation of N6-(dimethylallyl)adenosine (i(6)A). This chain is tRNA dimethylallyltransferase, found in Chlorobium phaeobacteroides (strain BS1).